A 1714-amino-acid polypeptide reads, in one-letter code: uncharacterized protein (1714 aa).

2 disordered regions span residues 47–70 (SVAGSEKNASDDDSDASSVMSDDL) and 584–616 (KKTGKGGWSGQKQQKPGAGGKKGATKESGKSKK). ATP-binding positions include 607–614 (ATKESGKS) and 806–813 (APTSAGKT). Positions 607-616 (ATKESGKSKK) are enriched in basic and acidic residues. The 171-residue stretch at 793–963 (LDSVDRGNSA…WLNSSEQAKS (171 aa)) folds into the Helicase ATP-binding domain. The short motif at 913-916 (DEVH) is the DEVH box element. Residues 1197–1223 (KRKRDDAEKKKKGDKDEDAGPEKDDDE) are disordered. A compositionally biased stretch (basic and acidic residues) spans 1199 to 1218 (KRDDAEKKKKGDKDEDAGPE). One can recognise a Helicase C-terminal domain in the interval 1237 to 1391 (ALERFKLRGR…NPPFTVLFLL (155 aa)).

It belongs to the helicase family. SKI2 subfamily.

Its subcellular location is the nucleus. This is an uncharacterized protein from Caenorhabditis elegans.